The chain runs to 257 residues: Deoxyribose-phosphate aldolase (257 aa).

The Proton donor/acceptor role is filled by aspartate 102. Catalysis depends on lysine 166, which acts as the Schiff-base intermediate with acetaldehyde. Residue lysine 198 is the Proton donor/acceptor of the active site.

This sequence belongs to the DeoC/FbaB aldolase family. DeoC type 2 subfamily.

Its subcellular location is the cytoplasm. It carries out the reaction 2-deoxy-D-ribose 5-phosphate = D-glyceraldehyde 3-phosphate + acetaldehyde. It functions in the pathway carbohydrate degradation; 2-deoxy-D-ribose 1-phosphate degradation; D-glyceraldehyde 3-phosphate and acetaldehyde from 2-deoxy-alpha-D-ribose 1-phosphate: step 2/2. Its function is as follows. Catalyzes a reversible aldol reaction between acetaldehyde and D-glyceraldehyde 3-phosphate to generate 2-deoxy-D-ribose 5-phosphate. In Shewanella woodyi (strain ATCC 51908 / MS32), this protein is Deoxyribose-phosphate aldolase.